The sequence spans 270 residues: tRNA pseudouridine synthase A (270 aa).

Aspartate 51 functions as the Nucleophile in the catalytic mechanism. Tyrosine 109 contributes to the substrate binding site.

This sequence belongs to the tRNA pseudouridine synthase TruA family. In terms of assembly, homodimer.

The enzyme catalyses uridine(38/39/40) in tRNA = pseudouridine(38/39/40) in tRNA. Functionally, formation of pseudouridine at positions 38, 39 and 40 in the anticodon stem and loop of transfer RNAs. The sequence is that of tRNA pseudouridine synthase A from Burkholderia vietnamiensis (strain G4 / LMG 22486) (Burkholderia cepacia (strain R1808)).